An 818-amino-acid chain; its full sequence is MSFLNSSRRRTRSPSPGQIFAPSATPIVIDSSPSVPSASSILDSLLGEFSEARDPYTVEAGPTGRSSDHLFSSPGVLTQSPGRENVPPRPSERTKDAHGKDRFLVSTERNGRSPFRGNPYRSAEIHSPKGRLKAPTKEGGTRKTKKFSSSNRTLTGRSTKFLAKTASKPTQSSKVPSEIPAAKLDSLQWEDGELRLELATTRRGSWTPIKDTSIDIVDPTRNLSPSNVSAAGSQKFSSMLSDYGFTKGSTLTMENELRREVPTTKRRLELLQGTANDIFSEGDFSRPPEKSVVNPNGTHSRRSRKTTSTTITSLSTAQYGHQDSRQMSNLADFFPSGEAVERPSGAIKKLKTSKSGTKKKGVKKAKEAPLFKVASIEDALKSLEDQVCLFGTSSQLERVSSDEEPQMANFNLNAQFPRKNSRPQKTRSPCSNPKTSKSLWYASSRGYDDIEFVDMIDSSNPKTLESVEASTFVTPIDSSPMHSQVASQMVFENPCDVSHVLTKIPQTGPKDPIENPVCPEIQIRHSGNVKTQSTSGQSIPSFRGLTTAQLAQKVASFGFKPLRSREKMISLLEKCWESQQQTHIPAMLPASHTALPDSVTRAEQMSKRDTIKSRDIRASKSRSNSNHIPGLVSSTSQNTGYAAKSPDCIRGSSKSNDIGTTQGSPLLTTQSVIVIPDSDDSDNDNNPTGGAYSYPSLASNTPSSSTRTMASESLLSVRTRYEANVGEEQGSNDINQQITKAIRAQPRLVAINGVKRPTWLEKILMYDPIVLDDLTVWLNTEGLDQIGEDSEVSGTTVREWCESKGICCTWKKKRHVAP.

Disordered stretches follow at residues 1 to 39 (MSFLNSSRRRTRSPSPGQIFAPSATPIVIDSSPSVPSAS), 53 to 151 (RDPY…SSSN), 279 to 324 (FSEG…HQDS), 413 to 437 (NAQFPRKNSRPQKTRSPCSNPKTSK), and 587 to 712 (MLPA…MASE). The segment covering 28 to 39 (VIDSSPSVPSAS) has biased composition (low complexity). Residues 90–103 (PSERTKDAHGKDRF) show a composition bias toward basic and acidic residues. Residues 306-316 (TTSTTITSLST) are compositionally biased toward low complexity. Residues 426 to 437 (TRSPCSNPKTSK) show a composition bias toward polar residues. Residues 604 to 618 (QMSKRDTIKSRDIRA) are compositionally biased toward basic and acidic residues. Composition is skewed to polar residues over residues 621–640 (SRSNSNHIPGLVSSTSQNTG), 652–672 (SSKSNDIGTTQGSPLLTTQSV), and 696–712 (SLASNTPSSSTRTMASE).

The protein belongs to the SLX4 family. Forms a heterodimer with SLX1. Phosphorylated in response to DNA damage.

The protein resides in the nucleus. Regulatory subunit of the SLX1-SLX4 structure-specific endonuclease that resolves DNA secondary structures generated during DNA repair and recombination. Has endonuclease activity towards branched DNA substrates, introducing single-strand cuts in duplex DNA close to junctions with ss-DNA. This chain is Structure-specific endonuclease subunit SLX4, found in Uncinocarpus reesii (strain UAMH 1704).